A 374-amino-acid chain; its full sequence is Protein TAB2 homolog, chloroplastic (374 aa).

Residues 1–64 (MATLGFNTRR…SLSITKEQEV (64 aa)) constitute a chloroplast transit peptide. The disordered stretch occupies residues 58-84 (ITKEQEVANEVEEDDPTSELSYLDPES). The span at 64–74 (VANEVEEDDPT) shows a compositional bias: acidic residues.

The protein localises to the plastid. It localises to the chloroplast. Functionally, nuclear genome-encoded A/U-rich RNA-binding protein involved in the biogenesis of photosystem I (PSI) and II (PSII). Required for the light-controlled accumulation of PSI and PSII during early plant development. Does not seem to be required for the translation of mRNAs of the PSI subunits. The protein is Protein TAB2 homolog, chloroplastic of Arabidopsis thaliana (Mouse-ear cress).